We begin with the raw amino-acid sequence, 288 residues long: Peptidyl-tRNA hydrolase, chloroplastic (288 aa).

Residues 1 to 55 (MKAVAFPAKIANLSFPSNCCSLFFRSPATFLSPALPCRKLTKGIRGLEGLMSQCL) constitute a chloroplast transit peptide. Residue Tyr-107 coordinates tRNA. The Proton acceptor role is filled by His-112. TRNA is bound by residues Phe-157, Asn-159, and Asn-205.

It belongs to the PTH family. Monomer.

It is found in the plastid. It localises to the chloroplast stroma. It catalyses the reaction an N-acyl-L-alpha-aminoacyl-tRNA + H2O = an N-acyl-L-amino acid + a tRNA + H(+). Functionally, the natural substrate for this enzyme may be peptidyl-tRNAs which drop off the ribosome during protein synthesis. The sequence is that of Peptidyl-tRNA hydrolase, chloroplastic from Arabidopsis thaliana (Mouse-ear cress).